The sequence spans 349 residues: MSGATLEAYLASCTARGDDLSRDVAAVIQRLAKAALDIRKLVNQGALGTAFNGTHGGSNTDGDLQKDLDILCDDQFLTCLQGAPVACYASEELENPVLLDPSARLAVAIDPLDGSSNIDNNVSIGTIFSVLPAAKGPDVDPSQSFLQPGNRQLAAGFFIYGPQTALVLSLGKGTEIFIFSSRLGCFVEAYKSAIIPERAHEFAINMSNYRHWEEAIRLYVDDCLAGSEGPRERDFNMRWIASLVAETYRILIRGGIFLYPADGRKGYSQGRLRLVYEANPIAFIIENAGGAATTSIDRILDLVPENLHQRVPLVFGSRREVARITRYHVDPNMIGERAPLFGKRGLFRA.

Mg(2+) contacts are provided by Glu91, Asp110, Leu112, and Asp113. Residues 113–116 and Asn205 contribute to the substrate site; that span reads DGSS. Glu277 lines the Mg(2+) pocket.

Belongs to the FBPase class 1 family. In terms of assembly, homotetramer. Mg(2+) serves as cofactor.

It is found in the cytoplasm. It carries out the reaction beta-D-fructose 1,6-bisphosphate + H2O = beta-D-fructose 6-phosphate + phosphate. Its pathway is carbohydrate biosynthesis; gluconeogenesis. The sequence is that of Fructose-1,6-bisphosphatase class 1 from Rhizobium meliloti (strain 1021) (Ensifer meliloti).